The primary structure comprises 501 residues: Nucleic-acid-binding protein from transposon X-element (501 aa).

Disordered stretches follow at residues 20-71 (SSPQ…GNSN) and 105-128 (AAAKRDAASAGTTSSAKRAQSKPP). The CCHC-type zinc finger occupies 285-302 (VQCHRCQQIGHTAKYCRK). Disordered regions lie at residues 353–385 (RPRSGVAGRTEVSDRPTPRGLAGGKEIPSSRGG) and 400–443 (QPMS…TDAS). Over residues 407–422 (QQQKQKQQPYDGSPSR) the composition is skewed to low complexity. Positions 434–443 (GTLQRSTDAS) are enriched in polar residues.

Its subcellular location is the virion. In terms of biological role, strongly basic protein that binds directly to retroviral RNA and may be involved in its packaging and in the reverse transcription process. This chain is Nucleic-acid-binding protein from transposon X-element, found in Drosophila melanogaster (Fruit fly).